Here is a 257-residue protein sequence, read N- to C-terminus: Cytosolic Fe-S cluster assembly factor NUBP2 homolog (257 aa).

14–21 (GKGGVGKS) serves as a coordination point for ATP. [4Fe-4S] cluster is bound by residues Cys-188 and Cys-191.

Belongs to the Mrp/NBP35 ATP-binding proteins family. NUBP2/CFD1 subfamily. As to quaternary structure, heterotetramer of 2 NUBP1 and 2 NUBP2 chains. Requires [4Fe-4S] cluster as cofactor.

The protein localises to the cytoplasm. Component of the cytosolic iron-sulfur (Fe/S) protein assembly (CIA) machinery. Required for maturation of extramitochondrial Fe-S proteins. The NUBP1-NUBP2 heterotetramer forms a Fe-S scaffold complex, mediating the de novo assembly of an Fe-S cluster and its transfer to target apoproteins. The chain is Cytosolic Fe-S cluster assembly factor NUBP2 homolog from Culex quinquefasciatus (Southern house mosquito).